We begin with the raw amino-acid sequence, 667 residues long: UvrABC system protein B (667 aa).

In terms of domain architecture, Helicase ATP-binding spans 31 to 414 (AGIESGEKEQ…EMDRTKHVVQ (384 aa)). 44 to 51 (GATGTGKT) contributes to the ATP binding site. A Beta-hairpin motif is present at residues 97-120 (YYDYYQPEAYVPSSDTYIEKDSAI). The region spanning 435–597 (QIDDLVGEIN…ITPHTIKKAI (163 aa)) is the Helicase C-terminal domain. Residues 630-665 (LDMISKLEEQMKTAAKKLDFEQAATLRDTVMELKAQ) form the UVR domain.

The protein belongs to the UvrB family. As to quaternary structure, forms a heterotetramer with UvrA during the search for lesions. Interacts with UvrC in an incision complex.

It is found in the cytoplasm. Its function is as follows. The UvrABC repair system catalyzes the recognition and processing of DNA lesions. A damage recognition complex composed of 2 UvrA and 2 UvrB subunits scans DNA for abnormalities. Upon binding of the UvrA(2)B(2) complex to a putative damaged site, the DNA wraps around one UvrB monomer. DNA wrap is dependent on ATP binding by UvrB and probably causes local melting of the DNA helix, facilitating insertion of UvrB beta-hairpin between the DNA strands. Then UvrB probes one DNA strand for the presence of a lesion. If a lesion is found the UvrA subunits dissociate and the UvrB-DNA preincision complex is formed. This complex is subsequently bound by UvrC and the second UvrB is released. If no lesion is found, the DNA wraps around the other UvrB subunit that will check the other stand for damage. The polypeptide is UvrABC system protein B (Lactiplantibacillus plantarum (strain ATCC BAA-793 / NCIMB 8826 / WCFS1) (Lactobacillus plantarum)).